A 645-amino-acid polypeptide reads, in one-letter code: 1-deoxy-D-xylulose-5-phosphate synthase (645 aa).

Thiamine diphosphate contacts are provided by residues His-87 and 128 to 130; that span reads GHS. Asp-159 is a Mg(2+) binding site. Thiamine diphosphate is bound by residues 160–161, Asn-188, Phe-295, and Glu-384; that span reads GA. Asn-188 contributes to the Mg(2+) binding site.

The protein belongs to the transketolase family. DXPS subfamily. In terms of assembly, homodimer. Mg(2+) is required as a cofactor. It depends on thiamine diphosphate as a cofactor.

The enzyme catalyses D-glyceraldehyde 3-phosphate + pyruvate + H(+) = 1-deoxy-D-xylulose 5-phosphate + CO2. It participates in metabolic intermediate biosynthesis; 1-deoxy-D-xylulose 5-phosphate biosynthesis; 1-deoxy-D-xylulose 5-phosphate from D-glyceraldehyde 3-phosphate and pyruvate: step 1/1. Functionally, catalyzes the acyloin condensation reaction between C atoms 2 and 3 of pyruvate and glyceraldehyde 3-phosphate to yield 1-deoxy-D-xylulose-5-phosphate (DXP). The polypeptide is 1-deoxy-D-xylulose-5-phosphate synthase (Alcanivorax borkumensis (strain ATCC 700651 / DSM 11573 / NCIMB 13689 / SK2)).